Here is a 177-residue protein sequence, read N- to C-terminus: Inorganic pyrophosphatase (177 aa).

Substrate contacts are provided by Lys-34, Arg-48, and Tyr-60. 3 residues coordinate Mg(2+): Asp-70, Asp-75, and Asp-107. Tyr-144 is a substrate binding site.

The protein belongs to the PPase family. Homohexamer. It depends on Mg(2+) as a cofactor.

Its subcellular location is the cytoplasm. The enzyme catalyses diphosphate + H2O = 2 phosphate + H(+). Its function is as follows. Catalyzes the hydrolysis of inorganic pyrophosphate (PPi) forming two phosphate ions. This Picrophilus torridus (strain ATCC 700027 / DSM 9790 / JCM 10055 / NBRC 100828 / KAW 2/3) protein is Inorganic pyrophosphatase.